Consider the following 187-residue polypeptide: Adenylate kinase (187 aa).

11–16 (GAGKGT) serves as a coordination point for ATP. The NMP stretch occupies residues 31–60 (STGDILREAVKNQTAMGIEAKRYMDAGDLV). AMP contacts are provided by residues Thr32, Arg37, 58-60 (DLV), 86-89 (GFPR), and Gln93. The tract at residues 127-137 (GRAEIEGRADD) is LID. Residue Arg128 coordinates ATP. Residues Arg134 and Arg145 each contribute to the AMP site. Residue Gly173 coordinates ATP.

Belongs to the adenylate kinase family. As to quaternary structure, monomer.

The protein resides in the cytoplasm. It carries out the reaction AMP + ATP = 2 ADP. It participates in purine metabolism; AMP biosynthesis via salvage pathway; AMP from ADP: step 1/1. In terms of biological role, catalyzes the reversible transfer of the terminal phosphate group between ATP and AMP. Plays an important role in cellular energy homeostasis and in adenine nucleotide metabolism. This chain is Adenylate kinase, found in Leptospira interrogans serogroup Icterohaemorrhagiae serovar copenhageni (strain Fiocruz L1-130).